The following is a 430-amino-acid chain: MATLSFKPSERYRLSDWRTNSYLLSTNAERQRDASHQIRQEARILRNETNNQIVWDEHDNRTRLAERIDTVNRWKETLDKCLTDLDAEIDSLAQAKESAEQNLQAKNLPLDVAIECLTLRESRRDIDVVRDPVEEELLKEVEVIEATKKVLQEKISQAFQHLCLLQEIRQQLNSDHRDKMETLEIDRGCLSLNLTSPNISLKVNPTRIPKDSTTLQQWDEFTRFNKNRAEAEMKASIELREAIALAIAQTNNELDAQRVATEFTFRKRLREMESFYSELKWQEKNTLEEIAELQGDIRRLEEDLRRKMMNLKLAHTRLESRTYRSNVELCRDQTQYGLIDEVHQLEATINTMKQKLAQTQNALDALFKHLARIQADIACKTNTLLLDTKCMDTRRKLTVPAEKFVPQVDTFTRTTNRTLSPLKICQLELT.

2 coiled-coil regions span residues 75 to 162 and 226 to 380; these read KETL…FQHL and KNRA…IACK.

Belongs to the tektin family. In terms of assembly, microtubule inner protein component of sperm flagellar doublet microtubules. May interact with CCDC172. Post-translationally, ubiquitinated, leading to its degradation. Deubiquitinated by USP16, promoting its stability. In terms of processing, tyrosine phosphorylated. Expressed in the testes (at protein level).

The protein resides in the cytoplasm. It is found in the cytoskeleton. Its subcellular location is the cilium axoneme. The protein localises to the flagellum axoneme. It localises to the microtubule organizing center. In terms of biological role, microtubule inner protein (MIP) part of the dynein-decorated doublet microtubules (DMTs) in cilia and flagellar axoneme. Plays a key role in the assembly or attachment of the inner dynein arm to microtubules in sperm flagella and tracheal cilia. Forms filamentous polymers in the walls of ciliary and flagellar microtubules. In Mus musculus (Mouse), this protein is Tektin-2 (Tekt2).